The chain runs to 231 residues: Ion-translocating oxidoreductase complex subunit E (231 aa).

7 consecutive transmembrane segments (helical) span residues 18–38 (GLVQLLGLCPLLAVTATITNA), 39–59 (LGLGVATLLVLIGSNVLVSLV), 69–89 (IPVFVMIIAALVTCVQLLINA), 93–113 (NLYLSLGIFLPLIVTNCVIIG), 127–147 (SAFDGLMMGLGFTAVLVVLGA), 157–177 (LFGGADLLLGDWASVLTIHVW), and 182–202 (PFLLAMLPPGAFIGMGLLIAL).

Belongs to the NqrDE/RnfAE family. The complex is composed of six subunits: RnfA, RnfB, RnfC, RnfD, RnfE and RnfG.

Its subcellular location is the cell inner membrane. Part of a membrane-bound complex that couples electron transfer with translocation of ions across the membrane. In Shewanella frigidimarina (strain NCIMB 400), this protein is Ion-translocating oxidoreductase complex subunit E.